The chain runs to 1576 residues: Proton channel OtopLc (1576 aa).

2 disordered regions span residues 1–602 (MDSS…SSPP) and 621–736 (QIGS…SSPV). 2 stretches are compositionally biased toward low complexity: residues 58 to 67 (SLAEEVLLLV) and 76 to 85 (LLGQPLPTLT). Composition is skewed to acidic residues over residues 103 to 116 (DEGD…EPVP), 159 to 171 (DDGE…DAEE), 186 to 198 (SNPD…EEQE), and 206 to 216 (PKEEDEEEDDD). Residues 219-228 (TPPPPLPPLP) show a composition bias toward pro residues. The segment covering 229–241 (SNFSYVQGHNLGQ) has biased composition (polar residues). The N-linked (GlcNAc...) asparagine glycan is linked to Asn230. Residues 243–252 (TPPLTKSPSN) show a composition bias toward low complexity. Positions 253-264 (SPSPPVTPPPCP) are enriched in pro residues. An N-linked (GlcNAc...) asparagine glycan is attached at Asn267. Residues 316-341 (DQPEPEDQPPEPENEPEPEPEPEPEP) show a composition bias toward acidic residues. Residues 347–356 (AREDYSRSLD) show a composition bias toward basic and acidic residues. Positions 362–376 (TTITTPPSNGYSASS) are enriched in polar residues. Positions 384 to 393 (HFAELDEDRG) are enriched in basic and acidic residues. Positions 402-419 (QEPEEEVEEEEEEEEEEL) are enriched in acidic residues. The span at 420-433 (TKETDEISVDRESL) shows a compositional bias: basic and acidic residues. The segment covering 434-457 (QDQGGDSISSPRPASILTGSISTS) has biased composition (polar residues). Low complexity predominate over residues 465–507 (SPKPESRGPSRSGSQRSQLRSGSQQGSIAESRGGSRIGSRTGS). Polar residues-rich tracts occupy residues 519–534 (PQAS…SQGQ) and 545–555 (KSGSQRMQSPQ). Over residues 563–575 (MPSPPLMRSPPPE) the composition is skewed to pro residues. Residues 661–685 (AAAAPAVTTTAATTAVTSQPRSHFT) are compositionally biased toward low complexity. Residues 686–709 (SSHHHYHLPHQFQHPHHQNHHTHS) are compositionally biased toward basic residues. A helical membrane pass occupies residues 741 to 761 (LFMAGVAPPIAAGAGSLMAMP). The interval 771 to 845 (GRVSARSGSQ…GSSSQPALSG (75 aa)) is disordered. Positions 776–799 (RSGSQHHVTIDESSLPSHKGNIQE) are enriched in polar residues. Positions 826 to 839 (DSSDPPSSPGGSSS) are enriched in low complexity. The next 2 membrane-spanning stretches (helical) occupy residues 891–911 (ALAT…GIAF) and 931–951 (LYLY…LIWG). Residues 962–973 (PSKSATKASGTD) show a composition bias toward polar residues. A disordered region spans residues 962–1001 (PSKSATKASGTDSMDESDTDSNSVHHRLPPPIPVRRPSLL). Transmembrane regions (helical) follow at residues 1019–1039 (GAVA…GQYF), 1051–1071 (LLAL…YFIF), and 1084–1104 (IIAR…WLNV). N-linked (GlcNAc...) asparagine glycosylation occurs at Asn1121. Helical transmembrane passes span 1179 to 1199 (FLFP…YVMW), 1239 to 1259 (FVGI…FVLI), 1272 to 1292 (VTIC…VGMI), 1310 to 1330 (ILLV…VIAG), 1340 to 1360 (LVPI…MFIL), 1381 to 1401 (IVTF…LEKS), and 1412 to 1432 (FYGL…AIFY). Asn1479 carries N-linked (GlcNAc...) asparagine glycosylation. The segment at 1498-1549 (EEVDSGESNSAEDAGAGAGSGGSRGSGGGAGAAEAGEAGEEGQQGGDSSCGL) is disordered. A compositionally biased stretch (low complexity) spans 1503–1512 (GESNSAEDAG). Over residues 1513 to 1528 (AGAGSGGSRGSGGGAG) the composition is skewed to gly residues.

Belongs to the otopetrin family.

It localises to the cell membrane. Functionally, proton-selective channel that specifically transports protons into cells. Proton-selective channel activity is probably required in cell types that use changes in intracellular pH for cell signaling or to regulate biochemical or developmental processes. The protein is Proton channel OtopLc of Drosophila melanogaster (Fruit fly).